A 309-amino-acid polypeptide reads, in one-letter code: Mas-related G-protein coupled receptor member E (309 aa).

Residues Met-1–Thr-21 are Extracellular-facing. Asn-19 carries an N-linked (GlcNAc...) asparagine glycan. A helical membrane pass occupies residues Ile-22 to Trp-42. The Cytoplasmic portion of the chain corresponds to Leu-43–Asp-59. A helical transmembrane segment spans residues Val-60–Leu-80. At Gln-81–His-91 the chain is on the extracellular side. The chain crosses the membrane as a helical span at residues Ile-92–Ile-112. Over Ser-113–Arg-132 the chain is Cytoplasmic. Residues Tyr-133–Leu-153 traverse the membrane as a helical segment. The Extracellular portion of the chain corresponds to Ser-154–Leu-168. The chain crosses the membrane as a helical span at residues Cys-169–Val-189. At Thr-190–Thr-212 the chain is on the cytoplasmic side. A helical transmembrane segment spans residues Leu-213–Leu-233. Residues Ser-234–His-247 are Extracellular-facing. Residue Asn-236 is glycosylated (N-linked (GlcNAc...) asparagine). A helical membrane pass occupies residues Phe-248–Gly-268. The Cytoplasmic segment spans residues Ser-269–Val-309.

Belongs to the G-protein coupled receptor 1 family. Mas subfamily.

It localises to the cell membrane. In terms of biological role, orphan receptor. May regulate nociceptor function and/or development, including the sensation or modulation of pain. The protein is Mas-related G-protein coupled receptor member E (Mrgpre) of Rattus norvegicus (Rat).